Reading from the N-terminus, the 291-residue chain is Small ribosomal subunit protein uS2 (291 aa).

Positions 241–270 (KREPRQINRPVMSSENQAEQQTSVANENVQ) are disordered. The span at 251-270 (VMSSENQAEQQTSVANENVQ) shows a compositional bias: polar residues.

The protein belongs to the universal ribosomal protein uS2 family.

The sequence is that of Small ribosomal subunit protein uS2 from Mycoplasma capricolum subsp. capricolum (strain California kid / ATCC 27343 / NCTC 10154).